The primary structure comprises 999 residues: Cytoplasmic dynein 2 intermediate chain 1 (999 aa).

4 stretches are compositionally biased toward basic and acidic residues: residues 1 to 19 (MEPG…DDLR), 29 to 138 (PKEE…EEIR), 146 to 260 (LLSR…EDRH), and 268 to 300 (GLHY…KELE). Positions 1-350 (MEPGKRRTKD…EHEAREKAEE (350 aa)) are disordered. Residue Ser-250 is modified to Phosphoserine. Positions 318 to 338 (LEDDFVDYEDDFEVCDGDDDS) are enriched in acidic residues. Over residues 339 to 350 (NNEHEAREKAEE) the composition is skewed to basic and acidic residues. Residues 416-495 (ASHRQKSRSQ…DIQTEDIETR (80 aa)) are binding to the DYNLT2B-DYNLT1/DYNLT3 dimer. WD repeat units follow at residues 637–677 (ICES…RIHH), 718–764 (AYKK…KADI), 850–890 (VRPI…PIMQ), and 895–935 (TSGH…LGPV).

This sequence belongs to the dynein light intermediate chain family. As to quaternary structure, intermediate chain of the cytoplasmic dynein complex 2, a multisubunit complex, composed at least of eleven different proteins. The cytoplasmic dynein 2 complex consists of two catalytic heavy chains (HCs) and a number of non-catalytic subunits presented by intermediate chains (ICs), light intermediate chains (LICs) and light chains (LCs). Among them, a heavy chain (DYNC2H1), two intermediate chains (DYNC2I2 and DYNC2I1), a light intermediate chain (DYNC2LI1), and a light chain (DYNLT2B) are unique to the cytoplasmic dynein complex 2, but a subset of the light chains are also shared by dynein-1 and dynein-2 complexes. Interacts with DYNC2I2; their C-terminal domains each bind a copy of the heavy chain, and their extended N-terminal regions are held together by an array of light chain dimers. Interacts with DYNLT2B. Interacts (via the N-terminal half) with DYNLT2B-DYNLT1 dimer or with DYNLT2B-DYNLT3 dimer; this interaction is crucial for retrograde trafficking of ciliary proteins.

The protein localises to the cell projection. It localises to the cilium. It is found in the cytoplasm. The protein resides in the cytoskeleton. Its subcellular location is the microtubule organizing center. The protein localises to the centrosome. Functionally, acts as one of several non-catalytic accessory components of the cytoplasmic dynein 2 complex (dynein-2 complex), a motor protein complex that drives the movement of cargos along microtubules within cilia and flagella in concert with the intraflagellar transport (IFT) system. DYNC2I1 plays a major role in retrograde ciliary protein trafficking in cilia and flagella. Also requires to maintain a functional transition zone. This is Cytoplasmic dynein 2 intermediate chain 1 (Dync2i1) from Mus musculus (Mouse).